The primary structure comprises 302 residues: Sulfate adenylyltransferase subunit 2 (302 aa).

Belongs to the PAPS reductase family. CysD subfamily. As to quaternary structure, heterodimer composed of CysD, the smaller subunit, and CysN.

The catalysed reaction is sulfate + ATP + H(+) = adenosine 5'-phosphosulfate + diphosphate. Its pathway is sulfur metabolism; hydrogen sulfide biosynthesis; sulfite from sulfate: step 1/3. Its function is as follows. With CysN forms the ATP sulfurylase (ATPS) that catalyzes the adenylation of sulfate producing adenosine 5'-phosphosulfate (APS) and diphosphate, the first enzymatic step in sulfur assimilation pathway. APS synthesis involves the formation of a high-energy phosphoric-sulfuric acid anhydride bond driven by GTP hydrolysis by CysN coupled to ATP hydrolysis by CysD. The chain is Sulfate adenylyltransferase subunit 2 from Salmonella schwarzengrund (strain CVM19633).